The primary structure comprises 59 residues: Protein translocase subunit SecE (59 aa).

The helical transmembrane segment at 35–55 (IVAIGIAIIGVVGFIIVLIGE) threads the bilayer.

Belongs to the SecE/SEC61-gamma family. In terms of assembly, component of the Sec protein translocase complex. Heterotrimer consisting of SecY (alpha), SecG (beta) and SecE (gamma) subunits. The heterotrimers can form oligomers, although 1 heterotrimer is thought to be able to translocate proteins. Interacts with the ribosome. May interact with SecDF, and other proteins may be involved.

It localises to the cell membrane. Functionally, essential subunit of the Sec protein translocation channel SecYEG. Clamps together the 2 halves of SecY. May contact the channel plug during translocation. The polypeptide is Protein translocase subunit SecE (Methanobrevibacter smithii (strain ATCC 35061 / DSM 861 / OCM 144 / PS)).